A 358-amino-acid polypeptide reads, in one-letter code: Oligopeptide transport ATP-binding protein OppD (358 aa).

An ABC transporter domain is found at 8–259 (LEVKDLAISF…PRHPYTWGLL (252 aa)). Residue 44–51 (GESGSGKS) participates in ATP binding.

This sequence belongs to the ABC transporter superfamily. In terms of assembly, the complex is composed of two ATP-binding proteins (OppD and OppF), two transmembrane proteins (OppB and OppC) and a solute-binding protein (OppA).

It is found in the cell membrane. It catalyses the reaction a [peptide](out) + ATP + H2O = a [peptide](in) + ADP + phosphate + H(+). In terms of biological role, part of the ABC transporter complex OppABCDF involved in the uptake of oligopeptides. Probably responsible for energy coupling to the transport system. Required for sporulation and genetic competence. The chain is Oligopeptide transport ATP-binding protein OppD from Bacillus subtilis (strain 168).